We begin with the raw amino-acid sequence, 647 residues long: DNA ligase (647 aa).

NAD(+) is bound by residues 30 to 34 (DEEYD), 79 to 80 (SM), and Glu-105. Residue Lys-107 is the N6-AMP-lysine intermediate of the active site. NAD(+)-binding residues include Arg-128, Glu-162, and Lys-301. Cys-395, Cys-398, Cys-411, and Cys-416 together coordinate Zn(2+). Positions 570–647 (KSDGVIFGKT…ESAFNELVKE (78 aa)) constitute a BRCT domain.

This sequence belongs to the NAD-dependent DNA ligase family. LigA subfamily. Mg(2+) serves as cofactor. Requires Mn(2+) as cofactor.

The enzyme catalyses NAD(+) + (deoxyribonucleotide)n-3'-hydroxyl + 5'-phospho-(deoxyribonucleotide)m = (deoxyribonucleotide)n+m + AMP + beta-nicotinamide D-nucleotide.. Functionally, DNA ligase that catalyzes the formation of phosphodiester linkages between 5'-phosphoryl and 3'-hydroxyl groups in double-stranded DNA using NAD as a coenzyme and as the energy source for the reaction. It is essential for DNA replication and repair of damaged DNA. This Campylobacter jejuni (strain RM1221) protein is DNA ligase.